The sequence spans 316 residues: Ribosomal RNA small subunit methyltransferase H (316 aa).

S-adenosyl-L-methionine is bound by residues 39 to 41 (GGH), D56, F82, D103, and Q110.

This sequence belongs to the methyltransferase superfamily. RsmH family.

It is found in the cytoplasm. It catalyses the reaction cytidine(1402) in 16S rRNA + S-adenosyl-L-methionine = N(4)-methylcytidine(1402) in 16S rRNA + S-adenosyl-L-homocysteine + H(+). Specifically methylates the N4 position of cytidine in position 1402 (C1402) of 16S rRNA. The protein is Ribosomal RNA small subunit methyltransferase H of Methylacidiphilum infernorum (isolate V4) (Methylokorus infernorum (strain V4)).